The following is a 230-amino-acid chain: RING finger protein 141 (230 aa).

G2 is lipidated: N-myristoyl glycine. The segment at 155–192 (CCICMDGRADLILPCAHSFCQKCIDKWSDRHRNCPICR) adopts an RING-type zinc-finger fold.

The protein resides in the membrane. In terms of biological role, may be involved in spermatogenesis. The sequence is that of RING finger protein 141 (RNF141) from Pongo abelii (Sumatran orangutan).